The chain runs to 3110 residues: Huntingtin (3110 aa).

Positions 1-58 are disordered; it reads MKAFESLKSFQQQQQQQQPPPQPPPPPPPPPQPPQPPPQGQPPPPPPLPGPAEEPLHR. K2 carries the N6-acetyllysine modification. Residues 18 to 52 are compositionally biased toward pro residues; the sequence is QPPPQPPPPPPPPPQPPQPPPQGQPPPPPPLPGPA. 2 positions are modified to N6-acetyllysine: K146 and K204. 2 HEAT repeats span residues 174-211 and 216-253; these read PYLV…SFGN and NEIK…HSRR. K313 is modified (N6-acetyllysine). A phosphoserine mark is found at S387, S389, and S402. K412 is modified (N6-acetyllysine). The interaction with ZDHHC17 stretch occupies residues 462 to 473; the sequence is GHDIITEQPRSQ. The segment at 487-549 is disordered; it reads DLTSAATDGD…PDSAVTPSDS (63 aa). Residues 521–549 show a composition bias toward polar residues; sequence DGTQASSPISDSSQTTTEGPDSAVTPSDS. Residue G522 is the site of N-myristoyl glycine attachment. Phosphoserine is present on residues S611 and S614. HEAT repeat units follow at residues 773-810 and 873-911; these read FSLV…SLCS and KLQE…KLFY. Residues 1137–1195 form a disordered region; sequence KAALPSLTNPPSLSPIRRKGKEKEPGEQTSTPMSPKKGGEASTASRQSDTSGPVTASKS. Over residues 1140–1151 the composition is skewed to low complexity; that stretch reads LPSLTNPPSLSP. Phosphoserine; by CDK5 occurs at positions 1150 and 1170. Residues 1178-1195 show a composition bias toward polar residues; the sequence is STASRQSDTSGPVTASKS. One copy of the HEAT 5 repeat lies at 1395-1432; that stretch reads LFEPLVIKALKQYTTTTSVQLQKQVLDLLAQLVQLRVN. S1845 carries the phosphoserine modification. Positions 2363–2372 match the Nuclear export signal motif; that stretch reads IVVSLARLPL. The segment at 2601 to 2628 is disordered; that stretch reads EEEWDEEEEEEADAPAPTSPPVSPVNSR. Residues 2602–2613 are compositionally biased toward acidic residues; it reads EEWDEEEEEEAD.

Belongs to the huntingtin family. In terms of assembly, interacts with PFN1. Interacts through its N-terminus with PRPF40A. Interacts with PQBP1. Interacts with SETD2. Interacts with SH3GLB1. Interacts with SYVN. Interacts with TPR; the interaction is inhibited by forms of Huntingtin with expanded polyglutamine stretch. Interacts with ZDHHC13 (via ANK repeats). Interacts with ZDHHC17 (via ANK repeats). Interacts with F8A1/F8A2/F8A3. Found in a complex with F8A1/F8A2/F8A3, HTT and RAB5A; mediates the recruitment of HTT by RAB5A. Post-translationally, phosphorylation at Ser-1150 and Ser-1170 by CDK5 in response to DNA damage in nuclei of neurons protects neurons against polyglutamine expansion as well as DNA damage mediated toxicity. In terms of processing, cleaved by caspases downstream of the polyglutamine stretch. Myristoylated at Gly-522, following proteolytic cleavage at Asp-521. Expressed to a high degree in all the regions of the brain of adults and in meiotic cells of the testis. In addition, very low levels are detected in various non-neuronal tissues (heart, muscle, liver, lung and kidney).

It localises to the cytoplasm. It is found in the nucleus. Its subcellular location is the cytoplasmic vesicle. The protein resides in the autophagosome. Its function is as follows. May play a role in microtubule-mediated transport or vesicle function. Functionally, promotes the formation of autophagic vesicles. The sequence is that of Huntingtin (Htt) from Rattus norvegicus (Rat).